The chain runs to 165 residues: Crossover junction endodeoxyribonuclease RuvC (165 aa).

Catalysis depends on residues D8, E67, and D139. Residues D8, E67, and D139 each coordinate Mg(2+).

Belongs to the RuvC family. As to quaternary structure, homodimer which binds Holliday junction (HJ) DNA. The HJ becomes 2-fold symmetrical on binding to RuvC with unstacked arms; it has a different conformation from HJ DNA in complex with RuvA. In the full resolvosome a probable DNA-RuvA(4)-RuvB(12)-RuvC(2) complex forms which resolves the HJ. The cofactor is Mg(2+).

The protein resides in the cytoplasm. It carries out the reaction Endonucleolytic cleavage at a junction such as a reciprocal single-stranded crossover between two homologous DNA duplexes (Holliday junction).. Its function is as follows. The RuvA-RuvB-RuvC complex processes Holliday junction (HJ) DNA during genetic recombination and DNA repair. Endonuclease that resolves HJ intermediates. Cleaves cruciform DNA by making single-stranded nicks across the HJ at symmetrical positions within the homologous arms, yielding a 5'-phosphate and a 3'-hydroxyl group; requires a central core of homology in the junction. The consensus cleavage sequence is 5'-(A/T)TT(C/G)-3'. Cleavage occurs on the 3'-side of the TT dinucleotide at the point of strand exchange. HJ branch migration catalyzed by RuvA-RuvB allows RuvC to scan DNA until it finds its consensus sequence, where it cleaves and resolves the cruciform DNA. The protein is Crossover junction endodeoxyribonuclease RuvC of Alkalilimnicola ehrlichii (strain ATCC BAA-1101 / DSM 17681 / MLHE-1).